The primary structure comprises 377 residues: Flap endonuclease 1 (377 aa).

Residues 1-105 are N-domain; that stretch reads MGIKGLSQVI…GELAKRASRQ (105 aa). D34 provides a ligand contact to Mg(2+). DNA contacts are provided by R47 and R71. D87 contributes to the Mg(2+) binding site. A disordered region spans residues 96–115; it reads GELAKRASRQQKAREEREEA. The segment at 123-254 is I-domain; that stretch reads MVDKFAKRTV…ARAVELIRQH (132 aa). Residues E159, E161, D180, and D182 each contribute to the Mg(2+) site. A DNA-binding site is contributed by E159. Residues G232 and D234 each contribute to the DNA site. Residue D234 coordinates Mg(2+). Positions 337–345 are interaction with PCNA; the sequence is PQGRLDSFF. The tract at residues 350–377 is disordered; sequence STKKEKEKPKAAAKRKRDTKSSAPKKKR. Basic residues predominate over residues 360 to 377; it reads AAAKRKRDTKSSAPKKKR.

Belongs to the XPG/RAD2 endonuclease family. FEN1 subfamily. In terms of assembly, interacts with PCNA. Three molecules of rad2 bind to one PCNA trimer with each molecule binding to one PCNA monomer. PCNA stimulates the nuclease activity without altering cleavage specificity. The cofactor is Mg(2+). Phosphorylated. Phosphorylation upon DNA damage induces relocalization to the nuclear plasma.

It is found in the nucleus. The protein resides in the nucleolus. The protein localises to the nucleoplasm. It localises to the mitochondrion. Functionally, structure-specific nuclease with 5'-flap endonuclease and 5'-3' exonuclease activities involved in DNA replication and repair. During DNA replication, cleaves the 5'-overhanging flap structure that is generated by displacement synthesis when DNA polymerase encounters the 5'-end of a downstream Okazaki fragment. It enters the flap from the 5'-end and then tracks to cleave the flap base, leaving a nick for ligation. Also involved in the long patch base excision repair (LP-BER) pathway, by cleaving within the apurinic/apyrimidinic (AP) site-terminated flap. Acts as a genome stabilization factor that prevents flaps from equilibrating into structures that lead to duplications and deletions. Also possesses 5'-3' exonuclease activity on nicked or gapped double-stranded DNA, and exhibits RNase H activity. Also involved in replication and repair of rDNA and in repairing mitochondrial DNA. This Schizosaccharomyces japonicus (strain yFS275 / FY16936) (Fission yeast) protein is Flap endonuclease 1.